The sequence spans 115 residues: Large ribosomal subunit protein uL23 (115 aa).

The protein belongs to the universal ribosomal protein uL23 family. Part of the 50S ribosomal subunit. Contacts protein L29, and trigger factor when it is bound to the ribosome.

One of the early assembly proteins it binds 23S rRNA. One of the proteins that surrounds the polypeptide exit tunnel on the outside of the ribosome. Forms the main docking site for trigger factor binding to the ribosome. This is Large ribosomal subunit protein uL23 from Granulibacter bethesdensis (strain ATCC BAA-1260 / CGDNIH1).